The chain runs to 435 residues: Protein SUPPRESSOR OF K(+) TRANSPORT GROWTH DEFECT 1 (435 aa).

The MIT domain maps to 7–72 (EQAIEYVKQA…LRRAEEIRAV (66 aa)). The interval 73–113 (LDEGGSGPGSNGDAAVATRPKTKPKDGEGGGKDGEDPEQSK) is disordered. Basic and acidic residues predominate over residues 95-113 (KPKDGEGGGKDGEDPEQSK). An ATP-binding site is contributed by 172 to 179 (GPPGTGKS).

It belongs to the AAA ATPase family. In terms of assembly, monomer or homodimer (in nucleotide-free form). Decamer, dodecamer or tetradecamer of two stacked respective homooligomeric rings (when bound to ATP); the dodecameric form seems to be predominant. Interacts with members of the ESCRT-III subcomplex such as LIP5, VPS60-1, VPS2.1, VPS20.1, VPS20.2, VPS24-1, VPS32.1, VPS32.2, CHMP1A and VPS24. Binds to PROS/At4g24370. Mostly expressed in leaves, to a lower extent in seeds, and barely in roots and flowers (at protein level). Particularly expressed in trichomes.

It localises to the cytoplasm. Its subcellular location is the nucleus. It is found in the endosome. The protein resides in the multivesicular body membrane. The protein localises to the prevacuolar compartment membrane. The catalysed reaction is ATP + H2O = ADP + phosphate + H(+). With respect to regulation, activated by LIP5 and PROS. In terms of biological role, involved in the transport of biosynthetic membrane proteins from the prevacuolar/endosomal compartment to the vacuole. Required for multivesicular body (MVB) protein sorting. Catalyzes the ATP-dependent dissociation of class E VPS proteins from endosomal membranes, such as the disassembly of the ESCRT-III complex. May also regulate cell cycle. Required during seed development for the formation of mucilage in seed coat and testa. Involved in the maintenance of Na(+)/K(+) homeostasis under salt stress. Required for cell expansion. The protein is Protein SUPPRESSOR OF K(+) TRANSPORT GROWTH DEFECT 1 of Arabidopsis thaliana (Mouse-ear cress).